We begin with the raw amino-acid sequence, 370 residues long: uncharacterized protein (370 aa).

Lys-207 is subject to N6-(pyridoxal phosphate)lysine.

This sequence belongs to the class-V pyridoxal-phosphate-dependent aminotransferase family. The cofactor is pyridoxal 5'-phosphate.

This is an uncharacterized protein from Bacillus subtilis (strain 168).